The following is a 408-amino-acid chain: MSKADVVIVGAGHGGAQCAIALRQNGFEGTITVIGREPEYPYERPPLSKEYFAREKTFDRLYIRPPTFWAEKNIEFKLGTEVTKVDPKAHELTLSNGESYGYGKLVWATGGDPRRLSCQGADLTGIHAVRTREDCDTLMAEVDAGTKNIVVIGGGYIGLEAAAVLSKMGLKVTLLEALPRVLARVAGEDLSTFYQKEHVDHGVDLRTEVMVDSLVGENGKVTGVQLAGGEVIPAEGVIVGIGIVPAVGPLIAAGAAGANGVDVDEYCRTSLPDIYAIGDCAAFACDYAGGNVMRVESVQNANDMGTCVAKAICGDEKPYKAFPWFWSNQYDLKLQTAGINLGFDKTVIRGNPEERSFSVVYLKDGRVVALDCVNMVKDYVQGRKLVEAGATPDLEALADAGKPLKELL.

The FAD site is built by Gly14, Lys49, Val82, Arg130, Asp279, and Val298.

The protein belongs to the FAD-dependent oxidoreductase family. As to quaternary structure, monomer. The dicamba O-demethylase multicomponent enzyme system is composed of an oxygenase component (DdmC) and an electron transfer component formed by a ferredoxin reductase (DdmA1) and a ferredoxin (DdmB). In vitro, dicamba O-demethylase assays in which DdmA2 is substituted for DdmA1 demonstrate that the two enzymes possess nearly identical activities. Requires FAD as cofactor.

It catalyses the reaction 2 reduced [2Fe-2S]-[ferredoxin] + NAD(+) + H(+) = 2 oxidized [2Fe-2S]-[ferredoxin] + NADH. Component of the dicamba O-demethylase multicomponent enzyme system involved in the degradation of the herbicide dicamba. In vitro, catalyzes the transfers of electrons from ferredoxin (DdmB) to NADH. Both NADH and NADPH support enzyme activity, with NADH being markedly more effective than NADPH. The sequence is that of Dicamba O-demethylase 1, ferredoxin reductase component from Stenotrophomonas maltophilia (Pseudomonas maltophilia).